Reading from the N-terminus, the 241-residue chain is Tumor necrosis factor receptor superfamily member grnd (241 aa).

The N-terminal stretch at 1–27 (MSVRKLSALSLSIGGVPLIPSVSLVAA) is a signal peptide. Residues 28–98 (ANGESRDCHG…EMLDIQNTQQ (71 aa)) are Extracellular-facing. Cystine bridges form between Cys-35/Cys-47, Cys-40/Cys-54, Cys-57/Cys-77, and Cys-61/Cys-73. N-linked (GlcNAc...) asparagine glycosylation occurs at Asn-63. Residues 99–119 (LILLLLTILLVLIALRCAFQF) traverse the membrane as a helical segment. Topologically, residues 120 to 241 (LRWLIGNRCF…PSAATIPVAF (122 aa)) are cytoplasmic.

In terms of assembly, interacts (via extracellular cysteine-rich domain) with egr (via secreted TNF-homology soluble form); forms heterohexamers when 3 copies associate with egr trimers. Interacts with Traf6/TRAF2 and veli (via PDZ domain). N-glycosylated on Asn-63. Glycosylation regulates ligand binding, specifically reducing affinity for the TNF egr, thereby inhibiting activation of JNK signaling. As to expression, expressed in the adult midgut; under normal conditions expressed at lower levels than the other TNF receptor wgn.

Its subcellular location is the apical cell membrane. It is found in the cytoplasmic vesicle membrane. Acts as a receptor for TNF-cytokine egr. Plays a role in activation of JNK signaling and is required for egr-induced apoptosis, including in wing imaginal discs during development. May also play an egr-independent role in cell proliferation. TNF receptor involved in triggering JNK-dependent proliferation of the enteroblast-enterocyte lineage in response to stress-induced release of egr by intestinal stem cells and enteroblasts. Involved in regulation of insulin production in response to dietary protein shortage keeping systemic growth in check. Activation in brain insulin producing cells through binding of egr released into the hemolymph in response to dietary amino acid shortage, results in JNK-dependent inhibition of insulin production. This Drosophila melanogaster (Fruit fly) protein is Tumor necrosis factor receptor superfamily member grnd.